A 229-amino-acid polypeptide reads, in one-letter code: RNA chaperone ProQ (229 aa).

Residues 105 to 178 form a disordered region; it reads EAKARVQAQR…PREEKHTPVS (74 aa). The segment covering 117 to 136 has biased composition (basic and acidic residues); the sequence is QQAKKREAAAAAGDKESAPR. The segment covering 137–146 has biased composition (basic residues); it reads RERKPRPAAP. A compositionally biased stretch (basic and acidic residues) spans 147–176; that stretch reads RRKEGAERKPRAEKPAAKAPRAPREEKHTP.

It belongs to the ProQ family.

It is found in the cytoplasm. Functionally, RNA chaperone with significant RNA binding, RNA strand exchange and RNA duplexing activities. May regulate ProP activity through an RNA-based, post-transcriptional mechanism. The chain is RNA chaperone ProQ from Escherichia fergusonii (strain ATCC 35469 / DSM 13698 / CCUG 18766 / IAM 14443 / JCM 21226 / LMG 7866 / NBRC 102419 / NCTC 12128 / CDC 0568-73).